We begin with the raw amino-acid sequence, 634 residues long: Chaperone protein HtpG (634 aa).

An a; substrate-binding region spans residues M1–R342. Positions E343–Q559 are b. The segment at I560–A634 is c.

This sequence belongs to the heat shock protein 90 family. Homodimer.

The protein resides in the cytoplasm. Molecular chaperone. Has ATPase activity. The protein is Chaperone protein HtpG of Ectopseudomonas mendocina (strain ymp) (Pseudomonas mendocina).